The chain runs to 79 residues: Cytochrome c-551 (79 aa).

Residues 1 to 14 (DGQSIYESGTSPTC) are compositionally biased toward polar residues. The segment at 1-35 (DGQSIYESGTSPTCASCHDRGTAGAPKINEPGDWD) is disordered. Heme c contacts are provided by C14, C17, H18, and M55.

In terms of processing, binds 1 heme c group covalently per subunit.

The chain is Cytochrome c-551 from Halorhodospira halochloris (Ectothiorhodospira halochloris).